Consider the following 395-residue polypeptide: 8-amino-7-oxononanoate synthase/2-amino-3-ketobutyrate coenzyme A ligase (395 aa).

Residue 110 to 111 (GF) participates in pyridoxal 5'-phosphate binding. A substrate-binding site is contributed by H135. Pyridoxal 5'-phosphate is bound by residues S182, 207-210 (DDAH), and 239-242 (TLSK). An N6-(pyridoxal phosphate)lysine modification is found at K242. T356 is a substrate binding site.

It belongs to the class-II pyridoxal-phosphate-dependent aminotransferase family. Homodimer. It depends on pyridoxal 5'-phosphate as a cofactor.

The catalysed reaction is 6-carboxyhexanoyl-[ACP] + L-alanine + H(+) = (8S)-8-amino-7-oxononanoate + holo-[ACP] + CO2. It carries out the reaction glycine + acetyl-CoA = (2S)-2-amino-3-oxobutanoate + CoA. It functions in the pathway cofactor biosynthesis; biotin biosynthesis. Catalyzes the decarboxylative condensation of pimeloyl-[acyl-carrier protein] and L-alanine to produce 8-amino-7-oxononanoate (AON), [acyl-carrier protein], and carbon dioxide. Can also use pimeloyl-CoA instead of pimeloyl-ACP as substrate. It also converts 2-amino-3-ketobutyrate and CoA to glycine and acetyl-CoA. Activity is also observed with the following combinations of substrates: acetyl-CoA and either L-alanine or L-serine, pimeloyl-CoA and either glycine or L-serine, and palmitoyl-CoA with L-alanine. In Thermus thermophilus (strain ATCC 27634 / DSM 579 / HB8), this protein is 8-amino-7-oxononanoate synthase/2-amino-3-ketobutyrate coenzyme A ligase.